A 100-amino-acid polypeptide reads, in one-letter code: Small ribosomal subunit protein uS14c (100 aa).

The protein belongs to the universal ribosomal protein uS14 family. As to quaternary structure, part of the 30S ribosomal subunit.

Its subcellular location is the plastid. The protein localises to the chloroplast. In terms of biological role, binds 16S rRNA, required for the assembly of 30S particles. The chain is Small ribosomal subunit protein uS14c from Huperzia lucidula (Shining clubmoss).